A 175-amino-acid chain; its full sequence is NADH-ubiquinone oxidoreductase chain 6 (175 aa).

A run of 5 helical transmembrane segments spans residues 1–21, 25–45, 47–67, 88–108, and 149–169; these read MMLY…VGFS, SPIY…GIVL, FGGS…MMVV, AVLG…YYVL, and YGTW…VVIM.

This sequence belongs to the complex I subunit 6 family. In terms of assembly, core subunit of respiratory chain NADH dehydrogenase (Complex I) which is composed of 45 different subunits.

The protein localises to the mitochondrion inner membrane. The catalysed reaction is a ubiquinone + NADH + 5 H(+)(in) = a ubiquinol + NAD(+) + 4 H(+)(out). Functionally, core subunit of the mitochondrial membrane respiratory chain NADH dehydrogenase (Complex I) which catalyzes electron transfer from NADH through the respiratory chain, using ubiquinone as an electron acceptor. Essential for the catalytic activity and assembly of complex I. This is NADH-ubiquinone oxidoreductase chain 6 (MT-ND6) from Bos indicus (Zebu).